Here is a 131-residue protein sequence, read N- to C-terminus: Small ribosomal subunit protein eS24 (131 aa).

Methionine 1 carries the post-translational modification N-acetylmethionine. Position 9 is a phosphothreonine (threonine 9). Lysine 37 is covalently cross-linked (Glycyl lysine isopeptide (Lys-Gly) (interchain with G-Cter in SUMO2)). Residues 90–100 (RLARHGLYEKK) show a composition bias toward basic and acidic residues. The interval 90-131 (RLARHGLYEKKKTSRKQRKERKNRMKKVRGTAKANVGAGKKK) is disordered. Positions 101–119 (KTSRKQRKERKNRMKKVRG) are enriched in basic residues.

It belongs to the eukaryotic ribosomal protein eS24 family. Component of the small ribosomal subunit. Part of the small subunit (SSU) processome, composed of more than 70 proteins and the RNA chaperone small nucleolar RNA (snoRNA) U3.

It is found in the cytoplasm. The protein localises to the nucleus. The protein resides in the nucleolus. Component of the small ribosomal subunit. The ribosome is a large ribonucleoprotein complex responsible for the synthesis of proteins in the cell. Required for processing of pre-rRNA and maturation of 40S ribosomal subunits. Part of the small subunit (SSU) processome, first precursor of the small eukaryotic ribosomal subunit. During the assembly of the SSU processome in the nucleolus, many ribosome biogenesis factors, an RNA chaperone and ribosomal proteins associate with the nascent pre-rRNA and work in concert to generate RNA folding, modifications, rearrangements and cleavage as well as targeted degradation of pre-ribosomal RNA by the RNA exosome. This is Small ribosomal subunit protein eS24 (RPS24) from Macaca fascicularis (Crab-eating macaque).